A 480-amino-acid chain; its full sequence is Glycogen synthase (480 aa).

The protein belongs to the glycosyltransferase 1 family. Bacterial/plant glycogen synthase subfamily.

It catalyses the reaction [(1-&gt;4)-alpha-D-glucosyl](n) + ADP-alpha-D-glucose = [(1-&gt;4)-alpha-D-glucosyl](n+1) + ADP + H(+). The protein operates within glycan biosynthesis; glycogen biosynthesis. Synthesizes alpha-1,4-glucan chains using ADP-glucose. This is Glycogen synthase from Rhizobium etli (strain ATCC 51251 / DSM 11541 / JCM 21823 / NBRC 15573 / CFN 42).